A 344-amino-acid polypeptide reads, in one-letter code: Ubiquitin-associated domain-containing protein 2 (344 aa).

The N-terminal stretch at Met1–Pro35 is a signal peptide. The Extracellular segment spans residues His36 to Lys91. A helical membrane pass occupies residues Phe92–Glu112. Residues Ala113–Asn125 lie on the Cytoplasmic side of the membrane. The helical transmembrane segment at Leu126–Pro146 threads the bilayer. Residues Arg147 to Thr163 are Extracellular-facing. N-linked (GlcNAc...) asparagine glycosylation occurs at Asn161. The helical transmembrane segment at Leu164–Ile184 threads the bilayer. Residues Ser185 to His344 are Cytoplasmic-facing. Residues Glu304–His344 enclose the UBA domain.

In terms of assembly, interacts with FAF2. Interacts with LMBR1L. Interacts with AMFR and VCP.

It localises to the endoplasmic reticulum membrane. Its function is as follows. Restricts trafficking of FAF2 from the endoplasmic reticulum to lipid droplets. In association with LMBR1L and E3 ubiquitin-protein ligase AMFR, negatively regulates the canonical Wnt signaling pathway in the lymphocytes by promoting the ubiquitin-mediated degradation of CTNNB1 and Wnt receptors FZD6 and LRP6. The protein is Ubiquitin-associated domain-containing protein 2 (UBAC2) of Homo sapiens (Human).